The sequence spans 489 residues: Heme-based aerotactic transducer HemAT (489 aa).

A Methyl-accepting transducer domain is found at 218-454 (PLSSLEATSQ…EVAEMVDDVD (237 aa)).

This sequence belongs to the methyl-accepting chemotaxis (MCP) protein family. Homotetramer.

Its function is as follows. Heme-containing signal transducer responsible for aerotaxis, the migratory response toward or away from oxygen. In Halobacterium salinarum (strain ATCC 700922 / JCM 11081 / NRC-1) (Halobacterium halobium), this protein is Heme-based aerotactic transducer HemAT (hemAT).